The primary structure comprises 292 residues: MSYAKEIDTLNQHIADFNKKINVSFEFFPPKNEKMETLLWDSIHRLKVLKPKFVSVTYGANSGERDRTHGIVKAIKQETGLEAAPHLTGIDATPEELKQIARDYWDSGIRRIVALRGDEPKGYAKKPFYASDLVELLRSVADFDISVAAYPEVHPEAKSAQADLINLKRKIDAGANHVITQFFFDIENYLRFRDRCASIGIDTEIVPGILPVTNFKQLQKMASFTNVKIPAWLVKAYDGLDNDPTTRNLVAASVAMDMVKILSREGVNDFHFYTLNRSELTYAICHMLGVRP.

Glu-26 acts as the Proton donor/acceptor in catalysis. Thr-57 contacts NADH. FAD contacts are provided by Tyr-58, Ala-60, His-86, Arg-116, Gly-117, Asp-118, Ala-130, Tyr-150, His-154, Ala-157, Asp-163, Asn-166, Arg-169, and Lys-170. Asp-118 is a (6S)-5-methyl-5,6,7,8-tetrahydrofolate binding site. Gln-181 is a binding site for NADH. 3 residues coordinate (6S)-5-methyl-5,6,7,8-tetrahydrofolate: Gln-181, Gln-217, and Arg-277.

This sequence belongs to the methylenetetrahydrofolate reductase family. Requires FAD as cofactor.

It carries out the reaction (6S)-5-methyl-5,6,7,8-tetrahydrofolate + NAD(+) = (6R)-5,10-methylene-5,6,7,8-tetrahydrofolate + NADH + H(+). It functions in the pathway one-carbon metabolism; tetrahydrofolate interconversion. It participates in amino-acid biosynthesis; L-methionine biosynthesis via de novo pathway. Functionally, catalyzes the NADH-dependent reduction of 5,10-methylenetetrahydrofolate to 5-methyltetrahydrofolate. Is required to provide the methyl group necessary for methionine synthetase to convert homocysteine to methionine; the methyl group is given by 5-methyltetrahydrofolate. In Haemophilus influenzae (strain ATCC 51907 / DSM 11121 / KW20 / Rd), this protein is 5,10-methylenetetrahydrofolate reductase (metF).